A 470-amino-acid polypeptide reads, in one-letter code: Phosphoribosylamine--glycine ligase (470 aa).

The region spanning 115 to 354 is the ATP-grasp domain; sequence KDFLKRIGVP…MAEISMAVVE (240 aa). 142–203 is an ATP binding site; the sequence is REKFNNGIVV…EERLRGIEVA (62 aa). Mg(2+) contacts are provided by Glu324 and Asn326.

This sequence belongs to the GARS family. Mg(2+) is required as a cofactor. Requires Mn(2+) as cofactor.

It catalyses the reaction 5-phospho-beta-D-ribosylamine + glycine + ATP = N(1)-(5-phospho-beta-D-ribosyl)glycinamide + ADP + phosphate + H(+). The protein operates within purine metabolism; IMP biosynthesis via de novo pathway; N(1)-(5-phospho-D-ribosyl)glycinamide from 5-phospho-alpha-D-ribose 1-diphosphate: step 2/2. The chain is Phosphoribosylamine--glycine ligase (purD) from Archaeoglobus fulgidus (strain ATCC 49558 / DSM 4304 / JCM 9628 / NBRC 100126 / VC-16).